The primary structure comprises 171 residues: bZIP transcription factor 2 (171 aa).

Over residues 1–24 the composition is skewed to low complexity; sequence MASSSSTYRSSSSSDGGNNNPSDS. Residues 1–54 form a disordered region; it reads MASSSSTYRSSSSSDGGNNNPSDSVVTVDERKRKRMLSNRESARRSRMRKQKHV. One can recognise a bZIP domain in the interval 29-92; sequence DERKRKRMLS…MKIQAENSVL (64 aa). The basic motif stretch occupies residues 31–52; it reads RKRKRMLSNRESARRSRMRKQK. A leucine-zipper region spans residues 57 to 71; sequence LTAQINQLSNDNRQI.

Forms heterodimers with BZIP9, BZIP10, BZIP25 and BZIP63. Component of a ternary complex composed of BZIP2-BZIP63 heterodimer and KIN10.

Its subcellular location is the nucleus. Its function is as follows. Transcription factor that binds to specific DNA sequences in target gene promoters. BZIP2-BZIP63-KIN10 complex binds to the ETFQO promoter to up-regulate its transcription. This Arabidopsis thaliana (Mouse-ear cress) protein is bZIP transcription factor 2.